Here is a 205-residue protein sequence, read N- to C-terminus: SCO2-like protein RF_0960 (205 aa).

3 residues coordinate Cu cation: cysteine 82, cysteine 86, and histidine 172.

Belongs to the SCO1/2 family.

In Rickettsia felis (strain ATCC VR-1525 / URRWXCal2) (Rickettsia azadi), this protein is SCO2-like protein RF_0960.